The following is a 77-amino-acid chain: UPF0213 protein VNG_2274C (77 aa).

A GIY-YIG domain is found at 1–75 (MHHVYVIECS…KQLSRAQKEA (75 aa)).

It belongs to the UPF0213 family.

The chain is UPF0213 protein VNG_2274C from Halobacterium salinarum (strain ATCC 700922 / JCM 11081 / NRC-1) (Halobacterium halobium).